The primary structure comprises 304 residues: MTTKFNVKTFQGMILALQDYWANVGCTIVQPFDMEVGAGTSHPMTALRALGPEPMAFAYVQPSRRPTDGRYGENPNRLQHYYQFQVVIKPSPDNIQELYLGSLKMLGFDPTQHDIRFVEDNWENPTLGAWGLGWEVWLNGMEVTQFTYFQQVGGLECKPVTGEVTYGLERLAMYIQGVDSVYDLVWSDGPLGKTTYGDVFHQNEVEQSTYNFEYADVDFLFKAFEQYEKEATELLALEKPLPLPAYERILKAAHSFNMLDARKAISVTERQRYILRIRTLTKGVAEAYYASREALGFPGCNKQV.

It belongs to the class-II aminoacyl-tRNA synthetase family. As to quaternary structure, tetramer of two alpha and two beta subunits.

Its subcellular location is the cytoplasm. It catalyses the reaction tRNA(Gly) + glycine + ATP = glycyl-tRNA(Gly) + AMP + diphosphate. This chain is Glycine--tRNA ligase alpha subunit, found in Actinobacillus pleuropneumoniae serotype 3 (strain JL03).